The chain runs to 628 residues: Putative ankyrin repeat protein L769 (628 aa).

ANK repeat units lie at residues 217-246 (NYMD…EYDF), 333-362 (DLDE…DINR), 421-451 (TAEN…NHDL), and 512-542 (NNLK…DQDY).

The sequence is that of Putative ankyrin repeat protein L769 from Acanthamoeba polyphaga mimivirus (APMV).